The chain runs to 431 residues: Ribosomal protein uS12 methylthiotransferase RimO (431 aa).

The MTTase N-terminal domain maps to 4 to 120 (LKLYVIVLGC…LAESINKTKK (117 aa)). 6 residues coordinate [4Fe-4S] cluster: cysteine 13, cysteine 49, cysteine 83, cysteine 150, cysteine 154, and cysteine 157. The 230-residue stretch at 136 to 365 (DSDLPYAYVK…MEVQAEISFL (230 aa)) folds into the Radical SAM core domain. One can recognise a TRAM domain in the interval 368–431 (QRLVGKVIDV…TYDLEGELVE (64 aa)).

Belongs to the methylthiotransferase family. RimO subfamily. [4Fe-4S] cluster is required as a cofactor.

The protein localises to the cytoplasm. It catalyses the reaction L-aspartate(89)-[ribosomal protein uS12]-hydrogen + (sulfur carrier)-SH + AH2 + 2 S-adenosyl-L-methionine = 3-methylsulfanyl-L-aspartate(89)-[ribosomal protein uS12]-hydrogen + (sulfur carrier)-H + 5'-deoxyadenosine + L-methionine + A + S-adenosyl-L-homocysteine + 2 H(+). Functionally, catalyzes the methylthiolation of an aspartic acid residue of ribosomal protein uS12. The protein is Ribosomal protein uS12 methylthiotransferase RimO of Fervidobacterium nodosum (strain ATCC 35602 / DSM 5306 / Rt17-B1).